We begin with the raw amino-acid sequence, 1233 residues long: Structural maintenance of chromosomes protein 1A (1233 aa).

32-39 (GPNGSGKS) serves as a coordination point for ATP. Coiled-coil stretches lie at residues 104–124 (EYKI…LEKL) and 163–503 (ELAQ…KAEI). The segment covering 284-293 (IKEKDSELNQ) has biased composition (basic and acidic residues). Disordered stretches follow at residues 284–307 (IKEK…NTSH) and 350–369 (FEER…TLEE). Serine 358 and serine 360 each carry phosphoserine. The region spanning 515–629 (VYGRLIDLCQ…DNVEDARRIA (115 aa)) is the SMC hinge domain. An N6-acetyllysine mark is found at lysine 648 and lysine 713. The stretch at 660-935 (KAKARRWDEK…RHNLLQACKM (276 aa)) forms a coiled coil. A disordered region spans residues 946-969 (TMDDISQEEGGSQGEESVSGSQRT). Low complexity predominate over residues 953-967 (EEGGSQGEESVSGSQ). 4 positions are modified to phosphoserine: serine 957, serine 962, serine 966, and serine 970. Positions 991–1068 (KDAQAEEEIK…FEQIKKERFD (78 aa)) form a coiled coil. Lysine 1037 is subject to N6-acetyllysine.

Belongs to the SMC family. SMC1 subfamily. Forms a heterodimer with SMC3 in cohesin complexes. Cohesin complexes are composed of the SMC1 (SMC1A or meiosis-specific SMC1B) and SMC3 heterodimer attached via their SMC hinge domain, RAD21 which link them, and one STAG protein (STAG1, STAG2 or meiosis-specific STAG3), which interacts with RAD21. In germ cell cohesin complexes, SMC1A is mutually exclusive with SMC1B. Found in a complex with CDCA5, SMC3 and RAD21, PDS5A/SCC-112 and PDS5B/APRIN. Interacts with STAG3, NDC80, BRAC1, BRAT1 and RPGR. Found in a complex containing POLE and SMC3. The cohesin complex interacts with the cohesin loading complex subunits NIPBL/Scc2 (via HEAT repeats) and MAU2/Scc4. NIPBL directly contacts all members of the complex, RAD21, SMC1A/B, SMC3 and STAG1. Interacts with SYCP2. Post-translationally, phosphorylated upon ionizing radiation or DNA methylation. Phosphorylation of Ser-957 and Ser-966 activates it and is required for S-phase checkpoint activation. Ubiquitinated by the DCX(DCAF15) complex, leading to its degradation.

The protein localises to the nucleus. The protein resides in the chromosome. Functionally, involved in chromosome cohesion during cell cycle and in DNA repair. Central component of cohesin complex. The cohesin complex is required for the cohesion of sister chromatids after DNA replication. The cohesin complex apparently forms a large proteinaceous ring within which sister chromatids can be trapped. At anaphase, the complex is cleaved and dissociates from chromatin, allowing sister chromatids to segregate. The cohesin complex may also play a role in spindle pole assembly during mitosis. Involved in DNA repair via its interaction with BRCA1 and its related phosphorylation by ATM, or via its phosphorylation by ATR. Works as a downstream effector both in the ATM/NBS1 branch and in the ATR/MSH2 branch of S-phase checkpoint. This Rattus norvegicus (Rat) protein is Structural maintenance of chromosomes protein 1A (Smc1a).